Here is a 384-residue protein sequence, read N- to C-terminus: Deoxyguanosinetriphosphate triphosphohydrolase-like protein (384 aa).

The HD domain maps to 62-198 (RLTHSLEVST…AALADDISYI (137 aa)).

Belongs to the dGTPase family. Type 2 subfamily.

The polypeptide is Deoxyguanosinetriphosphate triphosphohydrolase-like protein (Rickettsia conorii (strain ATCC VR-613 / Malish 7)).